We begin with the raw amino-acid sequence, 243 residues long: Nuclear ubiquitous casein and cyclin-dependent kinase substrate 1 (243 aa).

The segment at 1-243 is disordered; sequence MSRPVRNRKV…SEDDAQSGED (243 aa). Residue Y13 is modified to Phosphotyrosine. S14 and S19 each carry phosphoserine. Y26 carries the phosphotyrosine modification. Residues 35–51 are compositionally biased toward basic residues; sequence KKIRSSPREAKNKRRSG. Phosphoserine is present on residues S54, S58, S61, S73, S75, and S79. Over residues 64–77 the composition is skewed to basic and acidic residues; it reads KDVKTKKDDSHSAE. Positions 91–100 are enriched in low complexity; it reads QQRQAASKAA. Acidic residues predominate over residues 111–124; the sequence is VGSEEEQEEEDEAP. Phosphoserine is present on residues S113, S130, S132, and S144. The span at 132-145 shows a compositional bias: acidic residues; sequence SDEDFLVEDDDDSD. The span at 149–174 shows a compositional bias: basic residues; sequence SKKKNKKMVKKSKPERKEKKMPKPRL. T179 bears the Phosphothreonine mark. The residue at position 181 (S181) is a Phosphoserine. The segment covering 197–206 has biased composition (basic and acidic residues); the sequence is ASKEKTPSPK. Residue T202 is modified to Phosphothreonine. S204, S214, S223, S229, S234, and S240 each carry phosphoserine. A compositionally biased stretch (acidic residues) spans 232 to 243; sequence EGSEDDAQSGED.

Does not interact with RAD51. In terms of processing, phosphorylated in an ATM-dependent manner in response to DNA damage. Phosphorylated by CDK1 and casein kinase.

The protein localises to the nucleus. The protein resides in the chromosome. In terms of biological role, chromatin-associated protein involved in DNA repair by promoting homologous recombination (HR). Binds double-stranded DNA (dsDNA) and secondary DNA structures, such as D-loop structures, but with less affinity than RAD51AP1. This Bos taurus (Bovine) protein is Nuclear ubiquitous casein and cyclin-dependent kinase substrate 1 (NUCKS1).